Reading from the N-terminus, the 315-residue chain is Ribonuclease Z (315 aa).

Residues His-61, His-63, Asp-65, His-66, His-151, Asp-219, and His-278 each contribute to the Zn(2+) site. Residue Asp-65 is the Proton acceptor of the active site.

This sequence belongs to the RNase Z family. As to quaternary structure, homodimer. Zn(2+) is required as a cofactor.

It catalyses the reaction Endonucleolytic cleavage of RNA, removing extra 3' nucleotides from tRNA precursor, generating 3' termini of tRNAs. A 3'-hydroxy group is left at the tRNA terminus and a 5'-phosphoryl group is left at the trailer molecule.. Its function is as follows. Zinc phosphodiesterase, which displays some tRNA 3'-processing endonuclease activity. Probably involved in tRNA maturation, by removing a 3'-trailer from precursor tRNA. This chain is Ribonuclease Z, found in Clostridium botulinum (strain Eklund 17B / Type B).